A 703-amino-acid chain; its full sequence is Calpain-8 (703 aa).

Residues 45-344 (LFKDPEFPAC…YSRLEICNLS (300 aa)) form the Calpain catalytic domain. Residues Cys105, His262, and Asn286 contribute to the active site. Residues 355-512 (KWNLVLFNGR…VFSEKKAKAL (158 aa)) are domain III. Positions 513–531 (EIGDTVSGHPHEPHPRDMD) are linker. EF-hand domains follow at residues 532–566 (EEDE…VLSK), 575–608 (FNIN…LKIR), 605–640 (LKIR…AGFT), and 670–703 (IRLE…CVLV). A domain IV region spans residues 532–703 (EEDEHVRSLF…LAEWLCCVLV (172 aa)). Residues Asp588, Asp590, Thr592, Ser594, Glu599, Asp618, Asn620, Thr624, and Glu629 each contribute to the Ca(2+) site.

This sequence belongs to the peptidase C2 family. As to quaternary structure, monomer and homooligomer. Interacts with COPS1/GPS1, COPB1, EYA2, NME2, NME4 and TOMM70. Requires Ca(2+) as cofactor. In terms of processing, undergoes autolytic cleavage between Ala-5 and Ala-6 which gives rise to fragments extending from Ala-6 to the C-terminus, Ala-6 to the EF-hand 2 domain and from Ala-6 to the beginning of domain III. Predominantly expressed in the stomach. Localizes strictly to the surface mucus cells in the gastric epithelium and the mucus-secreting goblet cells in the duodenum. Detected in the pituitary after estrogen stimulation.

It is found in the cytoplasm. It localises to the golgi apparatus. It carries out the reaction Broad endopeptidase specificity.. Calcium-regulated non-lysosomal thiol-protease. Involved in membrane trafficking in the gastric surface mucus cells (pit cells) and may involve the membrane trafficking of mucus cells via interactions with coat protein. Proteolytically cleaves the beta-subunit of coatomer complex. This chain is Calpain-8 (Capn8), found in Rattus norvegicus (Rat).